Here is a 139-residue protein sequence, read N- to C-terminus: D-ribose pyranase (139 aa).

His-20 serves as the catalytic Proton donor. Substrate contacts are provided by residues Asp-28, His-106, and 128–130 (YAN).

The protein belongs to the RbsD / FucU family. RbsD subfamily. As to quaternary structure, homodecamer.

It localises to the cytoplasm. It catalyses the reaction beta-D-ribopyranose = beta-D-ribofuranose. It participates in carbohydrate metabolism; D-ribose degradation; D-ribose 5-phosphate from beta-D-ribopyranose: step 1/2. Catalyzes the interconversion of beta-pyran and beta-furan forms of D-ribose. The chain is D-ribose pyranase from Salmonella paratyphi B (strain ATCC BAA-1250 / SPB7).